The following is a 60-amino-acid chain: Large ribosomal subunit protein uL30 (60 aa).

The protein belongs to the universal ribosomal protein uL30 family. Part of the 50S ribosomal subunit.

The protein is Large ribosomal subunit protein uL30 of Alcanivorax borkumensis (strain ATCC 700651 / DSM 11573 / NCIMB 13689 / SK2).